We begin with the raw amino-acid sequence, 1197 residues long: DNA-directed RNA polymerase subunit beta (1197 aa).

The protein belongs to the RNA polymerase beta chain family. As to quaternary structure, the RNAP catalytic core consists of 2 alpha, 1 beta, 1 beta' and 1 omega subunit. When a sigma factor is associated with the core the holoenzyme is formed, which can initiate transcription.

The enzyme catalyses RNA(n) + a ribonucleoside 5'-triphosphate = RNA(n+1) + diphosphate. In terms of biological role, DNA-dependent RNA polymerase catalyzes the transcription of DNA into RNA using the four ribonucleoside triphosphates as substrates. This Streptococcus pyogenes serotype M12 (strain MGAS9429) protein is DNA-directed RNA polymerase subunit beta.